The primary structure comprises 62 residues: Sperm protamine P1 (62 aa).

A disordered region spans residues Met-1–Tyr-62.

It belongs to the protamine P1 family. As to expression, testis.

Its subcellular location is the nucleus. The protein localises to the chromosome. In terms of biological role, protamines substitute for histones in the chromatin of sperm during the haploid phase of spermatogenesis. They compact sperm DNA into a highly condensed, stable and inactive complex. The sequence is that of Sperm protamine P1 (PRM1) from Thylogale stigmatica (Red-legged pademelon).